Reading from the N-terminus, the 163-residue chain is MLWKANVWVLGEAAHGISGGTIIYQLLMFIILLALLRKFAWQPLMNIMKQREEHIATKSTRRKNDRQEAEKLLEEQRELMKQSRQEAQALIENAASLAEEQKEQIVASARAEAERVKEAAKKEIEREKEQAMAALREQVASLSVLIASKVIEKELTEQDQAAS.

Positions 1–11 (MLWKANVWVLG) are excised as a propeptide. The helical transmembrane segment at 16 to 36 (GISGGTIIYQLLMFIILLALL) threads the bilayer.

Belongs to the ATPase B chain family. F-type ATPases have 2 components, F(1) - the catalytic core - and F(0) - the membrane proton channel. F(1) has five subunits: alpha(3), beta(3), gamma(1), delta(1), epsilon(1). F(0) has three main subunits: a(1), b(2) and c(10-14). The alpha and beta chains form an alternating ring which encloses part of the gamma chain. F(1) is attached to F(0) by a central stalk formed by the gamma and epsilon chains, while a peripheral stalk is formed by the delta and b chains.

It localises to the cell membrane. In terms of biological role, f(1)F(0) ATP synthase produces ATP from ADP in the presence of a proton or sodium gradient. F-type ATPases consist of two structural domains, F(1) containing the extramembraneous catalytic core and F(0) containing the membrane proton channel, linked together by a central stalk and a peripheral stalk. During catalysis, ATP synthesis in the catalytic domain of F(1) is coupled via a rotary mechanism of the central stalk subunits to proton translocation. Component of the F(0) channel, it forms part of the peripheral stalk, linking F(1) to F(0). The polypeptide is ATP synthase subunit b (Bacillus sp. (strain PS3)).